A 701-amino-acid polypeptide reads, in one-letter code: MKALLASLLESSLNSFQKLSLTHCYAIKCGSISDIYVSNRILDSYIKFGFLGYANMLFDEMPKRDSVSWNTMISGYTSCGKLEDAWCLFTCMKRSGSDVDGYSFSRLLKGIASVKRFDLGEQVHGLVIKGGYECNVYVGSSLVDMYAKCERVEDAFEAFKEISEPNSVSWNALIAGFVQVRDIKTAFWLLGLMEMKAAVTMDAGTFAPLLTLLDDPMFCNLLKQVHAKVLKLGLQHEITICNAMISSYADCGSVSDAKRVFDGLGGSKDLISWNSMIAGFSKHELKESAFELFIQMQRHWVETDIYTYTGLLSACSGEEHQIFGKSLHGMVIKKGLEQVTSATNALISMYIQFPTGTMEDALSLFESLKSKDLISWNSIITGFAQKGLSEDAVKFFSYLRSSEIKVDDYAFSALLRSCSDLATLQLGQQIHALATKSGFVSNEFVISSLIVMYSKCGIIESARKCFQQISSKHSTVAWNAMILGYAQHGLGQVSLDLFSQMCNQNVKLDHVTFTAILTACSHTGLIQEGLELLNLMEPVYKIQPRMEHYAAAVDLLGRAGLVNKAKELIESMPLNPDPMVLKTFLGVCRACGEIEMATQVANHLLEIEPEDHFTYVSLSHMYSDLKKWEEKASVKKMMKERGVKKVPGWSWIEIRNQVKAFNAEDRSNPLCQDIYMMIKDLTQEMQWLDSDNGVDADSLHA.

PPR repeat units follow at residues 34 to 64 (DIYV…MPKR), 65 to 99 (DSVS…GSDV), 100 to 134 (DGYS…GYEC), 135 to 165 (NVYV…ISEP), 166 to 200 (NSVS…AAVT), 202 to 236 (DAGT…GLQH), 237 to 267 (EITI…LGGS), 269 to 303 (DLIS…WVET), 304 to 338 (DIYT…GLEQ), 339 to 371 (VTSA…LKSK), 372 to 406 (DLIS…EIKV), 407 to 441 (DDYA…GFVS), 442 to 472 (NEFV…ISSK), 474 to 508 (STVA…NVKL), 509 to 539 (DHVT…MEPV), and 545 to 575 (RMEH…MPLN). The type E motif stretch occupies residues 580 to 655 (VLKTFLGVCR…VPGWSWIEIR (76 aa)). The segment at 656 to 686 (NQVKAFNAEDRSNPLCQDIYMMIKDLTQEMQ) is type E(+) motif.

This sequence belongs to the PPR family. PCMP-E subfamily.

This Arabidopsis thaliana (Mouse-ear cress) protein is Putative pentatricopeptide repeat-containing protein At3g25970 (PCMP-E46).